Consider the following 415-residue polypeptide: Adenosylhomocysteinase (415 aa).

Thr-53, Asp-124, and Glu-147 together coordinate substrate. Residue 148–150 (TTT) participates in NAD(+) binding. Positions 177 and 181 each coordinate substrate. NAD(+)-binding positions include Asn-182, 211–216 (GYGWVG), Glu-234, Asn-269, 290–292 (SGH), and Asn-337.

This sequence belongs to the adenosylhomocysteinase family. NAD(+) serves as cofactor.

The protein localises to the cytoplasm. The enzyme catalyses S-adenosyl-L-homocysteine + H2O = L-homocysteine + adenosine. The protein operates within amino-acid biosynthesis; L-homocysteine biosynthesis; L-homocysteine from S-adenosyl-L-homocysteine: step 1/1. In terms of biological role, may play a key role in the regulation of the intracellular concentration of adenosylhomocysteine. The protein is Adenosylhomocysteinase of Sulfolobus acidocaldarius (strain ATCC 33909 / DSM 639 / JCM 8929 / NBRC 15157 / NCIMB 11770).